Consider the following 413-residue polypeptide: Replication factor C large subunit (413 aa).

54-61 (GPPGSGKT) serves as a coordination point for ATP.

The protein belongs to the activator 1 small subunits family. RfcL subfamily. In terms of assembly, heteromultimer composed of small subunits (RfcS) and large subunits (RfcL).

In terms of biological role, part of the RFC clamp loader complex which loads the PCNA sliding clamp onto DNA. The polypeptide is Replication factor C large subunit (Thermofilum pendens (strain DSM 2475 / Hrk 5)).